The following is a 675-amino-acid chain: Polyphosphate kinase (675 aa).

N42 contacts ATP. The Mg(2+) site is built by R372 and R401. Catalysis depends on H431, which acts as the Phosphohistidine intermediate. Y464, R558, and H586 together coordinate ATP.

The protein belongs to the polyphosphate kinase 1 (PPK1) family. It depends on Mg(2+) as a cofactor. In terms of processing, an intermediate of this reaction is the autophosphorylated ppk in which a phosphate is covalently linked to a histidine residue through a N-P bond.

The enzyme catalyses [phosphate](n) + ATP = [phosphate](n+1) + ADP. Functionally, catalyzes the reversible transfer of the terminal phosphate of ATP to form a long-chain polyphosphate (polyP). In Helicobacter pylori (strain ATCC 700392 / 26695) (Campylobacter pylori), this protein is Polyphosphate kinase.